Here is a 513-residue protein sequence, read N- to C-terminus: Histidine ammonia-lyase (513 aa).

Positions A146–G148 form a cross-link, 5-imidazolinone (Ala-Gly). Residue S147 is modified to 2,3-didehydroalanine (Ser).

Belongs to the PAL/histidase family. In terms of processing, contains an active site 4-methylidene-imidazol-5-one (MIO), which is formed autocatalytically by cyclization and dehydration of residues Ala-Ser-Gly.

Its subcellular location is the cytoplasm. The enzyme catalyses L-histidine = trans-urocanate + NH4(+). It participates in amino-acid degradation; L-histidine degradation into L-glutamate; N-formimidoyl-L-glutamate from L-histidine: step 1/3. The sequence is that of Histidine ammonia-lyase from Shewanella oneidensis (strain ATCC 700550 / JCM 31522 / CIP 106686 / LMG 19005 / NCIMB 14063 / MR-1).